The primary structure comprises 604 residues: Probable translation initiation factor IF-2 (604 aa).

Positions 18 to 232 (IRTPIVCVLG…VLIGLAQRYM (215 aa)) constitute a tr-type G domain. Positions 27–34 (GHVDHGKT) are G1. 27–34 (GHVDHGKT) contacts GTP. The interval 52-56 (AITQH) is G2. The tract at residues 88–91 (DTPG) is G3. GTP-binding positions include 88 to 92 (DTPGH) and 142 to 145 (TKLD). Residues 142 to 145 (TKLD) are G4. Residues 210-212 (SAH) form a G5 region.

This sequence belongs to the TRAFAC class translation factor GTPase superfamily. Classic translation factor GTPase family. IF-2 subfamily.

Function in general translation initiation by promoting the binding of the formylmethionine-tRNA to ribosomes. Seems to function along with eIF-2. The polypeptide is Probable translation initiation factor IF-2 (Methanospirillum hungatei JF-1 (strain ATCC 27890 / DSM 864 / NBRC 100397 / JF-1)).